We begin with the raw amino-acid sequence, 754 residues long: 5-methyltetrahydropteroyltriglutamate--homocysteine methyltransferase (754 aa).

5-methyltetrahydropteroyltri-L-glutamate-binding positions include 17-20 (RELK) and Lys117. Residues 431–433 (IGS) and Glu484 each bind L-homocysteine. L-methionine contacts are provided by residues 431–433 (IGS) and Glu484. Residues 515–516 (RC) and Trp561 each bind 5-methyltetrahydropteroyltri-L-glutamate. Residue Asp599 participates in L-homocysteine binding. Residue Asp599 participates in L-methionine binding. Glu605 serves as a coordination point for 5-methyltetrahydropteroyltri-L-glutamate. Zn(2+) contacts are provided by His641, Cys643, and Glu665. His694 serves as the catalytic Proton donor. Cys726 lines the Zn(2+) pocket.

It belongs to the vitamin-B12 independent methionine synthase family. Requires Zn(2+) as cofactor.

It catalyses the reaction 5-methyltetrahydropteroyltri-L-glutamate + L-homocysteine = tetrahydropteroyltri-L-glutamate + L-methionine. It participates in amino-acid biosynthesis; L-methionine biosynthesis via de novo pathway; L-methionine from L-homocysteine (MetE route): step 1/1. In terms of biological role, catalyzes the transfer of a methyl group from 5-methyltetrahydrofolate to homocysteine resulting in methionine formation. In Salmonella newport (strain SL254), this protein is 5-methyltetrahydropteroyltriglutamate--homocysteine methyltransferase.